Here is a 208-residue protein sequence, read N- to C-terminus: Imidazole glycerol phosphate synthase subunit HisH (208 aa).

The region spanning Asn2–Leu208 is the Glutamine amidotransferase type-1 domain. The Nucleophile role is filled by Cys85. Catalysis depends on residues His190 and Glu192.

In terms of assembly, heterodimer of HisH and HisF.

Its subcellular location is the cytoplasm. The catalysed reaction is 5-[(5-phospho-1-deoxy-D-ribulos-1-ylimino)methylamino]-1-(5-phospho-beta-D-ribosyl)imidazole-4-carboxamide + L-glutamine = D-erythro-1-(imidazol-4-yl)glycerol 3-phosphate + 5-amino-1-(5-phospho-beta-D-ribosyl)imidazole-4-carboxamide + L-glutamate + H(+). The enzyme catalyses L-glutamine + H2O = L-glutamate + NH4(+). It functions in the pathway amino-acid biosynthesis; L-histidine biosynthesis; L-histidine from 5-phospho-alpha-D-ribose 1-diphosphate: step 5/9. Functionally, IGPS catalyzes the conversion of PRFAR and glutamine to IGP, AICAR and glutamate. The HisH subunit catalyzes the hydrolysis of glutamine to glutamate and ammonia as part of the synthesis of IGP and AICAR. The resulting ammonia molecule is channeled to the active site of HisF. The protein is Imidazole glycerol phosphate synthase subunit HisH of Pelagibacter ubique (strain HTCC1062).